We begin with the raw amino-acid sequence, 281 residues long: Bifunctional protein FolD (281 aa).

NADP(+)-binding positions include 165–167 (GRG), Thr192, and Val233.

This sequence belongs to the tetrahydrofolate dehydrogenase/cyclohydrolase family. Homodimer.

The enzyme catalyses (6R)-5,10-methylene-5,6,7,8-tetrahydrofolate + NADP(+) = (6R)-5,10-methenyltetrahydrofolate + NADPH. The catalysed reaction is (6R)-5,10-methenyltetrahydrofolate + H2O = (6R)-10-formyltetrahydrofolate + H(+). The protein operates within one-carbon metabolism; tetrahydrofolate interconversion. Catalyzes the oxidation of 5,10-methylenetetrahydrofolate to 5,10-methenyltetrahydrofolate and then the hydrolysis of 5,10-methenyltetrahydrofolate to 10-formyltetrahydrofolate. The polypeptide is Bifunctional protein FolD (Corynebacterium diphtheriae (strain ATCC 700971 / NCTC 13129 / Biotype gravis)).